The chain runs to 131 residues: Large ribosomal subunit protein bL19 (131 aa).

The protein belongs to the bacterial ribosomal protein bL19 family.

This protein is located at the 30S-50S ribosomal subunit interface and may play a role in the structure and function of the aminoacyl-tRNA binding site. The sequence is that of Large ribosomal subunit protein bL19 from Anaeromyxobacter dehalogenans (strain 2CP-C).